The chain runs to 174 residues: Gamma-crystallin E (174 aa).

Beta/gamma crystallin 'Greek key' domains are found at residues 2 to 40 (GKIT…RVDS) and 41 to 83 (GCWM…RLIP). A connecting peptide region spans residues 84–87 (HSSS). 2 Beta/gamma crystallin 'Greek key' domains span residues 88 to 128 (HRIR…HVME) and 129 to 171 (GYWV…RRIM).

Belongs to the beta/gamma-crystallin family. In terms of tissue distribution, detected in the superior olivary complex and fibers of the ventral aoustic stria of the auditory hindbrain.

Functionally, crystallins are the dominant structural components of the vertebrate eye lens. This chain is Gamma-crystallin E (Cryge), found in Rattus norvegicus (Rat).